The following is a 157-amino-acid chain: Monooxygenase CPUR_05417 (157 aa).

Belongs to the avfA family.

Its pathway is secondary metabolite biosynthesis. In terms of biological role, monooxygenase; part of the ergochrome gene cluster responsible for the typical purple-black color of the ergot sclerotia. The ergochrome gene cluster produces several ergot pigments including the yellow ergochrome secalonic acid and its derivatives, as well as the red anthraquinones endocrocin and clavorubin. The pathway begins with the synthesis of atrochrysone thioester by the polyketide synthase (PKS) CPUR_05437. The atrochrysone carboxyl ACP thioesterase CPUR_05436 then breaks the thioester bond and releases the atrochrysone carboxylic acid from CPUR_05437. The atrochrysone carboxylic acid is then converted to atrochrysone which is further transformed into emodin anthrone. The next step is performed by the anthrone oxygenase CPUR_05434 that catalyzes the oxidation of emodinanthrone to emodin. Emodin is further modified to yield monodictyphenone via several steps involving CPUR_05427, CPUR_05428, CPUR_05429 and CPUR_05430. The short chain dehydrogenase/reductase CPUR_05418 then catalyzes the C-5 ketoreduction to give the xanthone skeleton of the monomeric units. Ergochromes formation requires further dimerization steps of different xanthone units, probably catalyzed by the cytochrome P450 monooxygenase CPUR_05419. CPUR_05425, CPUR_05426 and CPUR_05431 are unique to Claviceps, thus it is likely that they are involved in further modification of xanthone units or in their dimerization. The yellow ergochromes and the red anthraquinone pigments endocrocin and clavorubin are products from the same PKS derived precursors and the latter are likely shunt products in the pathway of xanthone biosynthesis. It is proposed that atrochrysone carboxylic acid released from the PKS CPUR_05437 can also be converted to endocrocin anthrone which is further oxidized into endocrocin by CPUR_05435. Endocrocin could be then modified to clavorubin, possibly by CPUR_05423 and CPUR_05431. Clavorubin is the principal anthraquinone metabolite produced by the cluster with a much higher yield compared to endocrocin. This is Monooxygenase CPUR_05417 from Claviceps purpurea (strain 20.1) (Ergot fungus).